The sequence spans 416 residues: Gamma-glutamyl phosphate reductase (416 aa).

Belongs to the gamma-glutamyl phosphate reductase family.

It is found in the cytoplasm. The enzyme catalyses L-glutamate 5-semialdehyde + phosphate + NADP(+) = L-glutamyl 5-phosphate + NADPH + H(+). It functions in the pathway amino-acid biosynthesis; L-proline biosynthesis; L-glutamate 5-semialdehyde from L-glutamate: step 2/2. Catalyzes the NADPH-dependent reduction of L-glutamate 5-phosphate into L-glutamate 5-semialdehyde and phosphate. The product spontaneously undergoes cyclization to form 1-pyrroline-5-carboxylate. The chain is Gamma-glutamyl phosphate reductase from Salmonella paratyphi C (strain RKS4594).